A 125-amino-acid polypeptide reads, in one-letter code: Small ribosomal subunit protein uS13 (125 aa).

The segment at serine 94 to lysine 125 is disordered. A compositionally biased stretch (basic residues) spans arginine 107–lysine 125.

The protein belongs to the universal ribosomal protein uS13 family. In terms of assembly, part of the 30S ribosomal subunit. Forms a loose heterodimer with protein S19. Forms two bridges to the 50S subunit in the 70S ribosome.

Functionally, located at the top of the head of the 30S subunit, it contacts several helices of the 16S rRNA. In the 70S ribosome it contacts the 23S rRNA (bridge B1a) and protein L5 of the 50S subunit (bridge B1b), connecting the 2 subunits; these bridges are implicated in subunit movement. Contacts the tRNAs in the A and P-sites. In Prosthecochloris aestuarii (strain DSM 271 / SK 413), this protein is Small ribosomal subunit protein uS13.